The sequence spans 192 residues: N-terminal acetyltransferase A complex catalytic subunit NAA10 (192 aa).

Residues 2–152 (VCIRRATVDD…DAYDMRKNLK (151 aa)) form the N-acetyltransferase domain.

This sequence belongs to the acetyltransferase family. ARD1 subfamily. As to quaternary structure, part of the NatA complex. Interacts with NAA15. As to expression, expressed in leaves, roots, shoots and flowers.

The catalysed reaction is N-terminal glycyl-[protein] + acetyl-CoA = N-terminal N(alpha)-acetylglycyl-[protein] + CoA + H(+). The enzyme catalyses N-terminal L-alanyl-[protein] + acetyl-CoA = N-terminal N(alpha)-acetyl-L-alanyl-[protein] + CoA + H(+). It carries out the reaction N-terminal L-seryl-[protein] + acetyl-CoA = N-terminal N(alpha)-acetyl-L-seryl-[protein] + CoA + H(+). It catalyses the reaction N-terminal L-valyl-[protein] + acetyl-CoA = N-terminal N(alpha)-acetyl-L-valyl-[protein] + CoA + H(+). The catalysed reaction is N-terminal L-cysteinyl-[protein] + acetyl-CoA = N-terminal N(alpha)-acetyl-L-cysteinyl-[protein] + CoA + H(+). The enzyme catalyses N-terminal L-threonyl-[protein] + acetyl-CoA = N-terminal N(alpha)-acetyl-L-threonyl-[protein] + CoA + H(+). In terms of biological role, catalytic subunit of the NatA N-alpha-acetyltransferase complex. Required for male gametocyte development, embryogenesis, suspensor development and the formation of the quiescent center (QC) in the root meristem. Involved in plant immunity through the regulation of SNC1 and RPM1 stability. This is N-terminal acetyltransferase A complex catalytic subunit NAA10 from Arabidopsis thaliana (Mouse-ear cress).